The sequence spans 350 residues: Protein-glutamate methylesterase/protein-glutamine glutaminase (350 aa).

Residues Thr5–Leu122 enclose the Response regulatory domain. Position 56 is a 4-aspartylphosphate (Asp56). The region spanning Leu153–Gly345 is the CheB-type methylesterase domain. Active-site residues include Ser165, His191, and Asp287.

Belongs to the CheB family. Post-translationally, phosphorylated by CheA. Phosphorylation of the N-terminal regulatory domain activates the methylesterase activity.

The protein localises to the cytoplasm. It carries out the reaction [protein]-L-glutamate 5-O-methyl ester + H2O = L-glutamyl-[protein] + methanol + H(+). The catalysed reaction is L-glutaminyl-[protein] + H2O = L-glutamyl-[protein] + NH4(+). Its function is as follows. Involved in chemotaxis. Part of a chemotaxis signal transduction system that modulates chemotaxis in response to various stimuli. Catalyzes the demethylation of specific methylglutamate residues introduced into the chemoreceptors (methyl-accepting chemotaxis proteins or MCP) by CheR. Also mediates the irreversible deamidation of specific glutamine residues to glutamic acid. The chain is Protein-glutamate methylesterase/protein-glutamine glutaminase from Photorhabdus laumondii subsp. laumondii (strain DSM 15139 / CIP 105565 / TT01) (Photorhabdus luminescens subsp. laumondii).